Consider the following 202-residue polypeptide: Glycoprotein U22 (202 aa).

The N-terminal stretch at 1–20 is a signal peptide; it reads MVPQGCSLVWVSALYVSVIA. Asn-54, Asn-107, Asn-112, and Asn-125 each carry an N-linked (GlcNAc...) asparagine; by host glycan. Residues 172 to 192 traverse the membrane as a helical segment; sequence FVYYCISVYLFAVVVLCSCWF.

Its subcellular location is the membrane. This chain is Glycoprotein U22 (U22), found in Homo sapiens (Human).